The chain runs to 574 residues: Proline--tRNA ligase (574 aa).

It belongs to the class-II aminoacyl-tRNA synthetase family. ProS type 1 subfamily. Homodimer.

It localises to the cytoplasm. The enzyme catalyses tRNA(Pro) + L-proline + ATP = L-prolyl-tRNA(Pro) + AMP + diphosphate. Catalyzes the attachment of proline to tRNA(Pro) in a two-step reaction: proline is first activated by ATP to form Pro-AMP and then transferred to the acceptor end of tRNA(Pro). As ProRS can inadvertently accommodate and process non-cognate amino acids such as alanine and cysteine, to avoid such errors it has two additional distinct editing activities against alanine. One activity is designated as 'pretransfer' editing and involves the tRNA(Pro)-independent hydrolysis of activated Ala-AMP. The other activity is designated 'posttransfer' editing and involves deacylation of mischarged Ala-tRNA(Pro). The misacylated Cys-tRNA(Pro) is not edited by ProRS. This Teredinibacter turnerae (strain ATCC 39867 / T7901) protein is Proline--tRNA ligase.